The chain runs to 359 residues: Type-1 angiotensin II receptor A (359 aa).

Residues 1 to 25 lie on the Extracellular side of the membrane; it reads MALNSSTEDGIKRIQDDCPRAGRHS. N-linked (GlcNAc...) asparagine glycosylation is present at asparagine 4. The angiotensin II site is built by glutamine 15 and aspartate 17. 2 cysteine pairs are disulfide-bonded: cysteine 18–cysteine 274 and cysteine 101–cysteine 180. The helical transmembrane segment at 26–55 threads the bilayer; the sequence is YIFVMIPTLYSIIFVVGIFGNSLVVIVIYF. At 56–61 the chain is on the cytoplasmic side; the sequence is YMKLKT. A helical transmembrane segment spans residues 62 to 89; that stretch reads VASVFLLNLALADLCFLLTLPLWAVYTA. At 90–98 the chain is on the extracellular side; that stretch reads MEYRWPFGN. A helical transmembrane segment spans residues 99 to 125; the sequence is HLCKIASASVSFNLYASVFLLTCLSID. Residues 126-141 lie on the Cytoplasmic side of the membrane; the sequence is RYLAIVHPMKSRLRRT. The helical transmembrane segment at 142–165 threads the bilayer; the sequence is MLVAKVTCIIIWLMAGLASLPAVI. Residues 166–190 are Extracellular-facing; it reads HRNVYFIENTNITVCAFHYESRNST. Residue arginine 167 coordinates angiotensin II. Asparagine 176 carries an N-linked (GlcNAc...) asparagine glycan. Angiotensin II-binding residues include phenylalanine 182, histidine 183, and tyrosine 184. The N-linked (GlcNAc...) asparagine glycan is linked to asparagine 188. The helical transmembrane segment at 191-216 threads the bilayer; it reads LPIGLGLTKNILGFLFPFLIILTSYT. Angiotensin II is bound at residue lysine 199. The Cytoplasmic portion of the chain corresponds to 217-239; it reads LIWKALKKAYEIQKNKPRNDDIF. Residues 240–268 form a helical membrane-spanning segment; the sequence is RIIMAIVLFFFFSWVPHQIFTFLDVLIQL. At 269 to 278 the chain is on the extracellular side; sequence GVIHDCKIAD. Residues 279 to 304 traverse the membrane as a helical segment; that stretch reads IVDTAMPITICIAYFNNCLNPLFYGF. The Cytoplasmic segment spans residues 305–359; it reads LGKKFKKYFLQLLKYIPPKAKSHSSLSTKMSTLSYRPSDNMSSAAKKPASCSEVE. Polar residues predominate over residues 335-347; sequence STLSYRPSDNMSS. Residues 335–359 are disordered; that stretch reads STLSYRPSDNMSSAAKKPASCSEVE. Cysteine 355 carries the S-palmitoyl cysteine lipid modification.

This sequence belongs to the G-protein coupled receptor 1 family. In terms of assembly, interacts with MAS1. Interacts with ARRB1. Interacts with FLNA (via filamin repeat 21); increases PKA-mediated phosphorylation of FLNA. In terms of processing, C-terminal Ser or Thr residues may be phosphorylated.

The protein localises to the cell membrane. Receptor for angiotensin II, a vasoconstricting peptide, which acts as a key regulator of blood pressure and sodium retention by the kidney. The activated receptor in turn couples to G-alpha proteins G(q) (GNAQ, GNA11, GNA14 or GNA15) and thus activates phospholipase C and increases the cytosolic Ca(2+) concentrations, which in turn triggers cellular responses such as stimulation of protein kinase C. The chain is Type-1 angiotensin II receptor A (Agtr1a) from Mus musculus (Mouse).